A 422-amino-acid polypeptide reads, in one-letter code: Validoxylamine A glucosyltransferase (422 aa).

Belongs to the glycosyltransferase 2 family. Mn(2+) is required as a cofactor.

The enzyme catalyses validoxylamine A + UDP-alpha-D-glucose = validamycin A + UDP + H(+). Its function is as follows. Involved in the biosynthesis of the antifungal agent validamycin A. Catalyzes the final attachment of glucose from UDP-alpha-D-glucose to validoxylamine A to yield validamycin A. UDP-glucose is the most efficient glycosyl donor, whereas GDP-glucose and ADP-glucose are much less efficient. ValG also utilizes UDP-galactose as substrate to produce the new validamycin analog, 4''-epi-validamycin A. This Streptomyces hygroscopicus subsp. jinggangensis (strain 5008) protein is Validoxylamine A glucosyltransferase.